Here is a 401-residue protein sequence, read N- to C-terminus: Chalcone synthase 1 (401 aa).

Cysteine 168 is an active-site residue.

It belongs to the thiolase-like superfamily. Chalcone/stilbene synthases family.

It catalyses the reaction (E)-4-coumaroyl-CoA + 3 malonyl-CoA + 3 H(+) = 2',4,4',6'-tetrahydroxychalcone + 3 CO2 + 4 CoA. It functions in the pathway secondary metabolite biosynthesis; flavonoid biosynthesis. The primary product of this enzyme is 4,2',4',6'-tetrahydroxychalcone (also termed naringenin-chalcone or chalcone) which can under specific conditions spontaneously isomerize into naringenin. The polypeptide is Chalcone synthase 1 (CHS1) (Sorghum bicolor (Sorghum)).